A 250-amino-acid polypeptide reads, in one-letter code: MAVCGLGSRLGLGSRLGLRGCFGAARLLYPRFQSRGPQGVEDGDRPQPSSKTPRIPKIYTKTGDKGFSSTFTGERRPKDDQVFEAVGTTDELSSAIGFALELVTEKGHTFAEELQKIQCTLQDVGSALATPCSSAREAHLKYTTFKAGPILELEQWIDKYTSQLPPLTAFILPSGGKISSALHFCRAVCRRAERRVVPLVQMGETDANVAKFLNRLSDYLFTLARYAAMKEGNQEKIYMKNDPSAESEGL.

The N-terminal 32 residues, 1 to 32, are a transit peptide targeting the mitochondrion; sequence MAVCGLGSRLGLGSRLGLRGCFGAARLLYPRF. The interval 34-59 is disordered; the sequence is SRGPQGVEDGDRPQPSSKTPRIPKIY. Residues 60 to 63, 68 to 69, and Lys-78 each bind ATP; these read TKTG and SS. The residue at position 134 (Ser-134) is a Phosphoserine. An ATP-binding site is contributed by 190–194; the sequence is RRAER. Lys-211 bears the N6-succinyllysine mark. Position 214 (Asn-214) interacts with ATP. Lys-230 carries the N6-acetyllysine; alternate modification. At Lys-230 the chain carries N6-succinyllysine; alternate.

This sequence belongs to the Cob(I)alamin adenosyltransferase family. In terms of assembly, homotrimer. In terms of tissue distribution, expressed in liver and skeletal muscle.

The protein localises to the mitochondrion. It catalyses the reaction cob(I)alamin-[corrinoid adenosyltransferase] + ATP = apo-[corrinoid adenosyltransferase] + adenosylcob(III)alamin + triphosphate. Converts cob(I)alamin to adenosylcobalamin (adenosylcob(III)alamin), a coenzyme for methylmalonyl-CoA mutase, therefore participates in the final step of the vitamin B12 conversion. Generates adenosylcobalamin (AdoCbl) and directly delivers the cofactor to MUT in a transfer that is stimulated by ATP-binding to MMAB and gated by MMAA. The sequence is that of Corrinoid adenosyltransferase MMAB from Homo sapiens (Human).